The following is a 616-amino-acid chain: Glutamine--fructose-6-phosphate aminotransferase [isomerizing] (616 aa).

Residue cysteine 2 is the Nucleophile; for GATase activity of the active site. The Glutamine amidotransferase type-2 domain occupies 2–222; it reads CGIIGYSGPR…QERIVALSGD (221 aa). The disordered stretch occupies residues 70–89; it reads TGIGHTRWATHGEPSDRNAH. 2 SIS domains span residues 289-428 and 461-606; these read IRDD…LRGF and LAHW…VDRP. The active-site For Fru-6P isomerization activity is the lysine 611.

Homodimer.

It is found in the cytoplasm. The enzyme catalyses D-fructose 6-phosphate + L-glutamine = D-glucosamine 6-phosphate + L-glutamate. In terms of biological role, catalyzes the first step in hexosamine metabolism, converting fructose-6P into glucosamine-6P using glutamine as a nitrogen source. This is Glutamine--fructose-6-phosphate aminotransferase [isomerizing] from Tropheryma whipplei (strain Twist) (Whipple's bacillus).